Here is a 131-residue protein sequence, read N- to C-terminus: Mesogenin-1 (131 aa).

The interval 22 to 79 (EDRSFGDSASSPESESFDSACSSPDARSSPTAGCEHAEQQKPKVKMSMRRRMKASERE) is disordered. Residues 27–45 (GDSASSPESESFDSACSSP) are compositionally biased toward low complexity. The segment covering 63-73 (PKVKMSMRRRM) has biased composition (basic residues). Residues 70-124 (RRRMKASEREKLRMRSLAEALHQLRDYLPPGYSRRGQPLTKIQTLKYTIQYIKEL) enclose the bHLH domain.

In terms of tissue distribution, coexpression of ntl and spt is required for expression.

It is found in the nucleus. Involved in specifying the paraxial, but not dorsal, mesoderm. May regulate the expression of T-box transcription factors required for mesoderm formation and differentiation. This is Mesogenin-1 (msgn1) from Danio rerio (Zebrafish).